We begin with the raw amino-acid sequence, 670 residues long: DNA ligase (670 aa).

NAD(+) is bound by residues 32-36 (DAEYD), 81-82 (SL), and glutamate 110. Catalysis depends on lysine 112, which acts as the N6-AMP-lysine intermediate. Residues arginine 133, glutamate 170, lysine 289, and lysine 313 each coordinate NAD(+). Residues cysteine 407, cysteine 410, cysteine 425, and cysteine 431 each contribute to the Zn(2+) site. In terms of domain architecture, BRCT spans 590–670 (ESQLSLKGQT…ALMDLLNAAN (81 aa)).

This sequence belongs to the NAD-dependent DNA ligase family. LigA subfamily. It depends on Mg(2+) as a cofactor. Requires Mn(2+) as cofactor.

It carries out the reaction NAD(+) + (deoxyribonucleotide)n-3'-hydroxyl + 5'-phospho-(deoxyribonucleotide)m = (deoxyribonucleotide)n+m + AMP + beta-nicotinamide D-nucleotide.. Functionally, DNA ligase that catalyzes the formation of phosphodiester linkages between 5'-phosphoryl and 3'-hydroxyl groups in double-stranded DNA using NAD as a coenzyme and as the energy source for the reaction. It is essential for DNA replication and repair of damaged DNA. In Shewanella frigidimarina (strain NCIMB 400), this protein is DNA ligase.